A 338-amino-acid polypeptide reads, in one-letter code: CRISPR-associated endonuclease Cas1 (338 aa).

Residues Glu-165, His-230, and Glu-245 each contribute to the Mn(2+) site.

It belongs to the CRISPR-associated endonuclease Cas1 family. As to quaternary structure, homodimer, forms a heterotetramer with a Cas2 homodimer. It depends on Mg(2+) as a cofactor. Requires Mn(2+) as cofactor.

CRISPR (clustered regularly interspaced short palindromic repeat), is an adaptive immune system that provides protection against mobile genetic elements (viruses, transposable elements and conjugative plasmids). CRISPR clusters contain spacers, sequences complementary to antecedent mobile elements, and target invading nucleic acids. CRISPR clusters are transcribed and processed into CRISPR RNA (crRNA). Acts as a dsDNA endonuclease. Involved in the integration of spacer DNA into the CRISPR cassette. In Fusobacterium nucleatum subsp. nucleatum (strain ATCC 25586 / DSM 15643 / BCRC 10681 / CIP 101130 / JCM 8532 / KCTC 2640 / LMG 13131 / VPI 4355), this protein is CRISPR-associated endonuclease Cas1.